Reading from the N-terminus, the 192-residue chain is Interleukin-18 (192 aa).

A propeptide spanning residues 1-35 (MAAIPVDDCINFVGMKFIDNTLYFVADSDENLETD) is cleaved from the precursor.

The protein belongs to the IL-1 family. In terms of assembly, forms a ternary complex with ligand-binding receptor subunit IL18R1 and signaling receptor subunit IL18RAP at the plasma membrane. Mature IL18 first binds to IL18R1 forming a low affinity binary complex, which then interacts with IL18RAP to form a high affinity ternary complex that signals inside the cell. Interacts with cargo receptor TMED10; the interaction mediates the translocation from the cytoplasm into the ERGIC (endoplasmic reticulum-Golgi intermediate compartment) and thereby secretion. In terms of processing, the pro-IL-18 precursor is processed by CASP1, CASP4 or CASP5 to yield its mature, active form. The pro-IL-18 precursor features autoinhibitory interactions between the propeptide and the post-cleavage-site region, preventing recognition by the IL18R1 receptor. Processing by CASP1, CASP4 or CASP5 induces conformational changes to generate critical receptor-binding sites. The mature form is then secreted and released in the extracellular milieu by passing through the gasdermin-D (GSDMD) pore. In contrast, cleavage by CASP3 inactivates IL18.

Its subcellular location is the cytoplasm. It is found in the cytosol. The protein resides in the secreted. Its function is as follows. Pro-inflammatory cytokine primarily involved in epithelial barrier repair, polarized T-helper 1 (Th1) cell and natural killer (NK) cell immune responses. Upon binding to IL18R1 and IL18RAP, forms a signaling ternary complex which activates NF-kappa-B, triggering synthesis of inflammatory mediators. Synergizes with IL12/interleukin-12 to induce IFNG synthesis from T-helper 1 (Th1) cells and natural killer (NK) cells. Involved in transduction of inflammation downstream of pyroptosis: its mature form is specifically released in the extracellular milieu by passing through the gasdermin-D (GSDMD) pore. This Felis catus (Cat) protein is Interleukin-18 (IL18).